The primary structure comprises 184 residues: Uroplakin-2 (184 aa).

An N-terminal signal peptide occupies residues 1–25 (MASTLPVQTLPLILILLAVLAPGTA). A propeptide spanning residues 26–84 (DFNISSLSGLLSPALTESLLIALPPCHLTGGNATLMVRRANDSKVVKSDFVVPPCRGRR) is cleaved from the precursor. Residues N28, N57, and N66 are each glycosylated (N-linked (GlcNAc...) asparagine). The Lumenal portion of the chain corresponds to 85–155 (ELVSVVDSGS…IGLGMARTGG (71 aa)). Residues 156-180 (MVVITVLLSVAMFLLVVGLIVALHW) form a helical membrane-spanning segment. The Cytoplasmic segment spans residues 181–184 (DARK).

Belongs to the uroplakin-2 family. As to quaternary structure, interacts with uroplakin-1a (UPK1A).

The protein localises to the cell membrane. Component of the asymmetric unit membrane (AUM); a highly specialized biomembrane elaborated by terminally differentiated urothelial cells. May play an important role in regulating the assembly of the AUM. The protein is Uroplakin-2 (Upk2) of Mus musculus (Mouse).